The sequence spans 84 residues: Neurotoxin BmK-M10 (84 aa).

The first 19 residues, methionine 1–serine 19, serve as a signal peptide directing secretion. An LCN-type CS-alpha/beta domain is found at arginine 21–glutamine 83. Intrachain disulfides connect cysteine 31–cysteine 82, cysteine 35–cysteine 55, cysteine 41–cysteine 65, and cysteine 45–cysteine 67. A propeptide (removed by a carboxypeptidase) is located at residue arginine 84.

Expressed by the venom gland.

It is found in the secreted. Its function is as follows. Binds to voltage-dependent sodium channels (Nav) and voltage-dependent delayed rectifier potassium channels and inhibits the inactivation of the activated channels, thereby blocking neuronal transmission. Administration to mice at a dosage of 0.8 mg/kg produces an analgesic effect. The chain is Neurotoxin BmK-M10 from Olivierus martensii (Manchurian scorpion).